Reading from the N-terminus, the 164-residue chain is Protein 4 (164 aa).

In Lettuce big-vein associated virus (isolate Japan/Kagawa) (LBVaV), this protein is Protein 4.